The chain runs to 876 residues: Alanine--tRNA ligase (876 aa).

Positions 566, 570, 668, and 672 each coordinate Zn(2+).

Belongs to the class-II aminoacyl-tRNA synthetase family. The cofactor is Zn(2+).

Its subcellular location is the cytoplasm. It carries out the reaction tRNA(Ala) + L-alanine + ATP = L-alanyl-tRNA(Ala) + AMP + diphosphate. In terms of biological role, catalyzes the attachment of alanine to tRNA(Ala) in a two-step reaction: alanine is first activated by ATP to form Ala-AMP and then transferred to the acceptor end of tRNA(Ala). Also edits incorrectly charged Ser-tRNA(Ala) and Gly-tRNA(Ala) via its editing domain. The polypeptide is Alanine--tRNA ligase (Petrotoga mobilis (strain DSM 10674 / SJ95)).